A 369-amino-acid polypeptide reads, in one-letter code: UDP-3-O-(3-hydroxymyristoyl)glucosamine N-acyltransferase (369 aa).

The active-site Proton acceptor is H240.

This sequence belongs to the transferase hexapeptide repeat family. LpxD subfamily. Homotrimer.

It catalyses the reaction a UDP-3-O-[(3R)-3-hydroxyacyl]-alpha-D-glucosamine + a (3R)-hydroxyacyl-[ACP] = a UDP-2-N,3-O-bis[(3R)-3-hydroxyacyl]-alpha-D-glucosamine + holo-[ACP] + H(+). The enzyme catalyses UDP-3-O-[(3R)-3-hydroxytetradecanoyl]-alpha-D-glucosamine + (3R)-hydroxytetradecanoyl-[ACP] = UDP-2-N,3-O-bis[(3R)-3-hydroxytetradecanoyl]-alpha-D-glucosamine + holo-[ACP] + H(+). It functions in the pathway glycolipid biosynthesis; lipid IV(A) biosynthesis; lipid IV(A) from (3R)-3-hydroxytetradecanoyl-[acyl-carrier-protein] and UDP-N-acetyl-alpha-D-glucosamine: step 3/6. In terms of biological role, catalyzes the N-acylation of UDP-3-O-(hydroxytetradecanoyl)glucosamine using 3-hydroxytetradecanoyl-ACP as the acyl donor. Is involved in the biosynthesis of lipid A, a phosphorylated glycolipid that anchors the lipopolysaccharide to the outer membrane of the cell. The chain is UDP-3-O-(3-hydroxymyristoyl)glucosamine N-acyltransferase from Blochmanniella floridana.